A 341-amino-acid polypeptide reads, in one-letter code: UDP-glucose 4-epimerase (341 aa).

Belongs to the polysaccharide synthase family.

It catalyses the reaction UDP-alpha-D-glucose = UDP-alpha-D-galactose. Its function is as follows. Epimerizes UDP-galactose to UDP-glucose. This is UDP-glucose 4-epimerase (capD) from Rickettsia canadensis (strain McKiel).